The sequence spans 135 residues: Large ribosomal subunit protein uL18 (135 aa).

The disordered stretch occupies residues 1-23 (MAQTQADTAARKPVGQSVSATRR).

The protein belongs to the universal ribosomal protein uL18 family. In terms of assembly, part of the 50S ribosomal subunit; part of the 5S rRNA/L5/L18/L25 subcomplex. Contacts the 5S and 23S rRNAs.

This is one of the proteins that bind and probably mediate the attachment of the 5S RNA into the large ribosomal subunit, where it forms part of the central protuberance. The sequence is that of Large ribosomal subunit protein uL18 from Mycobacterium marinum (strain ATCC BAA-535 / M).